A 327-amino-acid chain; its full sequence is Beta-ketoacyl-[acyl-carrier-protein] synthase III (327 aa).

Active-site residues include Cys112 and His253. Residues 254-258 (QANER) are ACP-binding. Asn283 is an active-site residue.

This sequence belongs to the thiolase-like superfamily. FabH family. As to quaternary structure, homodimer.

It is found in the cytoplasm. It carries out the reaction malonyl-[ACP] + acetyl-CoA + H(+) = 3-oxobutanoyl-[ACP] + CO2 + CoA. The protein operates within lipid metabolism; fatty acid biosynthesis. Functionally, catalyzes the condensation reaction of fatty acid synthesis by the addition to an acyl acceptor of two carbons from malonyl-ACP. Catalyzes the first condensation reaction which initiates fatty acid synthesis and may therefore play a role in governing the total rate of fatty acid production. Possesses both acetoacetyl-ACP synthase and acetyl transacylase activities. Its substrate specificity determines the biosynthesis of branched-chain and/or straight-chain of fatty acids. The protein is Beta-ketoacyl-[acyl-carrier-protein] synthase III of Chlamydia muridarum (strain MoPn / Nigg).